A 434-amino-acid chain; its full sequence is Serine hydroxymethyltransferase (434 aa).

(6S)-5,6,7,8-tetrahydrofolate contacts are provided by residues Leu-128 and 132-134; that span reads GHL. At Lys-237 the chain carries N6-(pyridoxal phosphate)lysine.

The protein belongs to the SHMT family. Homodimer. Pyridoxal 5'-phosphate serves as cofactor.

The protein localises to the cytoplasm. It carries out the reaction (6R)-5,10-methylene-5,6,7,8-tetrahydrofolate + glycine + H2O = (6S)-5,6,7,8-tetrahydrofolate + L-serine. The protein operates within one-carbon metabolism; tetrahydrofolate interconversion. Its pathway is amino-acid biosynthesis; glycine biosynthesis; glycine from L-serine: step 1/1. Its function is as follows. Catalyzes the reversible interconversion of serine and glycine with tetrahydrofolate (THF) serving as the one-carbon carrier. This reaction serves as the major source of one-carbon groups required for the biosynthesis of purines, thymidylate, methionine, and other important biomolecules. Also exhibits THF-independent aldolase activity toward beta-hydroxyamino acids, producing glycine and aldehydes, via a retro-aldol mechanism. This Corynebacterium efficiens (strain DSM 44549 / YS-314 / AJ 12310 / JCM 11189 / NBRC 100395) protein is Serine hydroxymethyltransferase.